Consider the following 378-residue polypeptide: Flagellin E (378 aa).

Coiled-coil stretches lie at residues 98–139 (QSAN…KLLN) and 311–339 (MQNRFQHAISNLDNVHENLAASNSRIKDA).

It belongs to the bacterial flagellin family. Heteromer of multiple flagellin subunits including FlaA, FlaB, FlaC, FlaD and FlaE.

The protein localises to the secreted. Its subcellular location is the bacterial flagellum. Its function is as follows. Flagellin is the subunit protein which polymerizes to form the filaments of bacterial flagella. FlaE is not essential for flagellar synthesis and motility. This is Flagellin E (flaE) from Vibrio cholerae serotype O1 (strain ATCC 39541 / Classical Ogawa 395 / O395).